An 865-amino-acid chain; its full sequence is Protein translocase subunit SecA (865 aa).

Residues Gln-85, 103-107, and Asp-505 each bind ATP; that span reads GEGKT. Cys-847, Cys-849, Cys-858, and His-859 together coordinate Zn(2+).

The protein belongs to the SecA family. As to quaternary structure, monomer and homodimer. Part of the essential Sec protein translocation apparatus which comprises SecA, SecYEG and auxiliary proteins SecDF. Other proteins may also be involved. Requires Zn(2+) as cofactor.

The protein resides in the cell membrane. The protein localises to the cytoplasm. It catalyses the reaction ATP + H2O + cellular proteinSide 1 = ADP + phosphate + cellular proteinSide 2.. In terms of biological role, part of the Sec protein translocase complex. Interacts with the SecYEG preprotein conducting channel. Has a central role in coupling the hydrolysis of ATP to the transfer of proteins into and across the cell membrane, serving as an ATP-driven molecular motor driving the stepwise translocation of polypeptide chains across the membrane. The sequence is that of Protein translocase subunit SecA from Lactococcus lactis subsp. lactis (strain IL1403) (Streptococcus lactis).